The following is a 951-amino-acid chain: WD repeat-containing and planar cell polarity effector protein fritz (951 aa).

WD repeat units lie at residues P304–A343 and Q345–Q384. Polar residues-rich tracts occupy residues T709 to P720, I757 to P771, and S818 to P828. Disordered regions lie at residues T709–P776, T816–H883, and E903–V951. Positions S930–S942 are enriched in low complexity.

Belongs to the WD repeat fritz family.

The protein resides in the cell membrane. The protein localises to the cytoplasm. It is found in the cytoskeleton. It localises to the cilium axoneme. Probable effector of the planar cell polarity signaling pathway which regulates the septin cytoskeleton in both ciliogenesis and collective cell movements. Functions cell autonomously to regulate wing cell hair polarity and number. This is WD repeat-containing and planar cell polarity effector protein fritz (frtz) from Drosophila melanogaster (Fruit fly).